The chain runs to 231 residues: 7-cyano-7-deazaguanine synthase (231 aa).

8 to 18 (FSGGQDSTTCL) serves as a coordination point for ATP. 4 residues coordinate Zn(2+): Cys188, Cys197, Cys200, and Cys203.

The protein belongs to the QueC family. Zn(2+) serves as cofactor.

It catalyses the reaction 7-carboxy-7-deazaguanine + NH4(+) + ATP = 7-cyano-7-deazaguanine + ADP + phosphate + H2O + H(+). It participates in purine metabolism; 7-cyano-7-deazaguanine biosynthesis. In terms of biological role, catalyzes the ATP-dependent conversion of 7-carboxy-7-deazaguanine (CDG) to 7-cyano-7-deazaguanine (preQ(0)). The chain is 7-cyano-7-deazaguanine synthase from Salmonella agona (strain SL483).